Here is a 387-residue protein sequence, read N- to C-terminus: Prostatic acid phosphatase (387 aa).

An N-terminal signal peptide occupies residues 1–34; that stretch reads MRNAALLMTRATSLRLSLLLLLSFLPDLDGGVRA. Arg45 contributes to the substrate binding site. His46 acts as the Nucleophile in catalysis. Arg49 provides a ligand contact to substrate. A glycan (N-linked (GlcNAc...) asparagine) is linked at Asn96. Arg113 is a binding site for substrate. 3 disulfide bridges follow: Cys163/Cys374, Cys217/Cys315, and Cys349/Cys353. A glycan (N-linked (GlcNAc...) asparagine) is linked at Asn222. His291 is a binding site for substrate. Residue Asp292 is the Proton donor of the active site. Asn335 carries N-linked (GlcNAc...) asparagine glycosylation.

The protein belongs to the histidine acid phosphatase family. As to quaternary structure, homodimer; dimer formation is required for phosphatase activity.

Its subcellular location is the secreted. It carries out the reaction a phosphate monoester + H2O = an alcohol + phosphate. The enzyme catalyses 1-(9Z-octadecenoyl)-sn-glycero-3-phosphate + H2O = 1-(9Z-octadecenoyl)-sn-glycerol + phosphate. It catalyses the reaction O-phospho-L-tyrosyl-[protein] + H2O = L-tyrosyl-[protein] + phosphate. Its function is as follows. A non-specific tyrosine phosphatase that dephosphorylates a diverse number of substrates under acidic conditions (pH 4-6) including alkyl, aryl, and acyl orthophosphate monoesters and phosphorylated proteins. Has lipid phosphatase activity and inactivates lysophosphatidic acid in seminal plasma. The chain is Prostatic acid phosphatase (ACP3) from Bos taurus (Bovine).